Here is a 135-residue protein sequence, read N- to C-terminus: Retinol-binding protein 1 (135 aa).

The interval 22–32 (RALDVNVALRK) is important for interaction with STRA6. The all-trans-retinol site is built by Lys41, Met63, and Gln109.

The protein belongs to the calycin superfamily. Fatty-acid binding protein (FABP) family. In terms of assembly, interacts (only as retinol-free apoprotein) with STRA6.

It is found in the cytoplasm. The protein localises to the lipid droplet. Functionally, cytoplasmic retinol-binding protein. Accepts retinol from the transport protein STRA6, and thereby contributes to retinol uptake, storage and retinoid homeostasis. The protein is Retinol-binding protein 1 (Rbp1) of Mus musculus (Mouse).